Here is a 362-residue protein sequence, read N- to C-terminus: Ribosomal RNA large subunit methyltransferase F (362 aa).

Residues 1 to 28 (MNTPLKPKHGQKTNRKPKANKPVVKKQQ) show a composition bias toward basic residues. The tract at residues 1–40 (MNTPLKPKHGQKTNRKPKANKPVVKKQQTKQPPTHKVQGE) is disordered.

The protein belongs to the methyltransferase superfamily. METTL16/RlmF family.

The protein resides in the cytoplasm. The catalysed reaction is adenosine(1618) in 23S rRNA + S-adenosyl-L-methionine = N(6)-methyladenosine(1618) in 23S rRNA + S-adenosyl-L-homocysteine + H(+). Functionally, specifically methylates the adenine in position 1618 of 23S rRNA. In Vibrio cholerae serotype O1 (strain M66-2), this protein is Ribosomal RNA large subunit methyltransferase F.